The primary structure comprises 337 residues: MVEINLRELKKYANPFFLTIRKDKILVNNKRMARLSRTKMDKIEEEFGIPVIYSKTYEYVSTKVGRFINKHKIIAPRDIVIVGLSGGKDSLLLLHLLEVYRRKYGIKLIAVTVDVNIGGIRPWKEDTEGVKLIKHHCEMLNVPHIILKNDLDVVELSEILTKHSKGMEFSPCFSCSVIKRHLLGKLAKEIAENENIPYEKVKLAYGHNLDDNSDTILANIFKGERLKFMRPLTRFKYNEVDYQSFKIPLEECIIIRPMLPILERDIIKALEECGIEYYKDKDMCPYSRDRGDSVRRRCHEILEKLEEEIPNIREMVVSSALKTVEYYSKNPYGEDNL.

Glycine 83 serves as a coordination point for ATP. [4Fe-4S] cluster contacts are provided by cysteine 172 and cysteine 175. Positions 179 and 206 each coordinate ATP. Cysteine 284 contacts [4Fe-4S] cluster.

Belongs to the TtcA family. It depends on [4Fe-4S] cluster as a cofactor. The cofactor is Mg(2+).

This Methanocaldococcus jannaschii (strain ATCC 43067 / DSM 2661 / JAL-1 / JCM 10045 / NBRC 100440) (Methanococcus jannaschii) protein is Probable sulfurtransferase.